We begin with the raw amino-acid sequence, 344 residues long: Tetraacyldisaccharide 4'-kinase (344 aa).

65–72 (HAGGTGKT) is a binding site for ATP.

This sequence belongs to the LpxK family.

It catalyses the reaction a lipid A disaccharide + ATP = a lipid IVA + ADP + H(+). It participates in glycolipid biosynthesis; lipid IV(A) biosynthesis; lipid IV(A) from (3R)-3-hydroxytetradecanoyl-[acyl-carrier-protein] and UDP-N-acetyl-alpha-D-glucosamine: step 6/6. Transfers the gamma-phosphate of ATP to the 4'-position of a tetraacyldisaccharide 1-phosphate intermediate (termed DS-1-P) to form tetraacyldisaccharide 1,4'-bis-phosphate (lipid IVA). This is Tetraacyldisaccharide 4'-kinase from Neisseria meningitidis serogroup C / serotype 2a (strain ATCC 700532 / DSM 15464 / FAM18).